The following is a 405-amino-acid chain: NADH-quinone oxidoreductase subunit D (405 aa).

Belongs to the complex I 49 kDa subunit family. In terms of assembly, NDH-1 is composed of 14 different subunits. Subunits NuoB, C, D, E, F, and G constitute the peripheral sector of the complex.

Its subcellular location is the cell inner membrane. It catalyses the reaction a quinone + NADH + 5 H(+)(in) = a quinol + NAD(+) + 4 H(+)(out). Its function is as follows. NDH-1 shuttles electrons from NADH, via FMN and iron-sulfur (Fe-S) centers, to quinones in the respiratory chain. The immediate electron acceptor for the enzyme in this species is believed to be ubiquinone. Couples the redox reaction to proton translocation (for every two electrons transferred, four hydrogen ions are translocated across the cytoplasmic membrane), and thus conserves the redox energy in a proton gradient. This Leptospira borgpetersenii serovar Hardjo-bovis (strain L550) protein is NADH-quinone oxidoreductase subunit D.